Here is a 328-residue protein sequence, read N- to C-terminus: UPF0421 protein SAR1980 (328 aa).

4 helical membrane-spanning segments follow: residues 19-39, 61-81, 108-128, and 132-152; these read IAIF…IYAI, LPAT…FGDQ, VAVL…IFNF, and TLTA…VFPP.

It belongs to the UPF0421 family.

Its subcellular location is the cell membrane. The chain is UPF0421 protein SAR1980 from Staphylococcus aureus (strain MRSA252).